Consider the following 149-residue polypeptide: Altered inheritance of mitochondria protein 11 (149 aa).

The next 2 helical transmembrane spans lie at 29 to 48 (MMRF…LAIT) and 79 to 101 (LVLA…CWIW).

It belongs to the AIM11 family.

It is found in the membrane. This chain is Altered inheritance of mitochondria protein 11 (AIM11), found in Vanderwaltozyma polyspora (strain ATCC 22028 / DSM 70294 / BCRC 21397 / CBS 2163 / NBRC 10782 / NRRL Y-8283 / UCD 57-17) (Kluyveromyces polysporus).